The sequence spans 123 residues: Fluoride-specific ion channel FluC (123 aa).

4 helical membrane passes run 1-21 (MQWL…GWLA), 32-52 (LGTL…LVWF), 66-86 (FVIT…VEVF), and 99-119 (GLIG…FYFF). Na(+) contacts are provided by Gly-73 and Thr-76.

Belongs to the fluoride channel Fluc/FEX (TC 1.A.43) family.

It localises to the cell inner membrane. The catalysed reaction is fluoride(in) = fluoride(out). Na(+) is not transported, but it plays an essential structural role and its presence is essential for fluoride channel function. Its function is as follows. Fluoride-specific ion channel. Important for reducing fluoride concentration in the cell, thus reducing its toxicity. The sequence is that of Fluoride-specific ion channel FluC from Psychrobacter cryohalolentis (strain ATCC BAA-1226 / DSM 17306 / VKM B-2378 / K5).